We begin with the raw amino-acid sequence, 152 residues long: ATP synthase epsilon chain 2 (152 aa).

It belongs to the ATPase epsilon chain family. F-type ATPases have 2 components, CF(1) - the catalytic core - and CF(0) - the membrane proton channel. CF(1) has five subunits: alpha(3), beta(3), gamma(1), delta(1), epsilon(1). CF(0) has three main subunits: a, b and c.

The protein resides in the cell inner membrane. In terms of biological role, produces ATP from ADP in the presence of a proton gradient across the membrane. The protein is ATP synthase epsilon chain 2 of Burkholderia orbicola (strain AU 1054).